Consider the following 512-residue polypeptide: Ammonium transporter 2 (512 aa).

At 1–47 (MSSVNSIPTATSTVYISVLPATATPSGGSGGNVLHEDLNKFYDYGNT) the chain is on the extracellular side. A helical transmembrane segment spans residues 48-68 (SWILACTPLCLIMVPGVAFFY). Over 69-77 (SGLARRKNT) the chain is Cytoplasmic. Residues 78 to 98 (LALIMLSMLGLCVSFFQWYFW) traverse the membrane as a helical segment. The Extracellular segment spans residues 99–137 (GYSLAFSQTGTSGYIGNLRHFAFIRTLADYSPGSNNIPE). A helical transmembrane segment spans residues 138–158 (LVFANFQGMFAAITVALFTGA). Residues 159 to 167 (AAERGRIGP) lie on the Cytoplasmic side of the membrane. Residues 168–188 (MLIITFVWLTVVYCPIACWIW) traverse the membrane as a helical segment. At 189–201 (NPNGWAFKFGVYD) the chain is on the extracellular side. Residues 202–222 (FAGGGPVEVGSGFAALAYTVC) form a helical membrane-spanning segment. The Cytoplasmic segment spans residues 223 to 238 (LGRRSKFVEEQFRPHS). The chain crosses the membrane as a helical span at residues 239-259 (VLNVVLGTSLLWFGWLGFNGG). The Extracellular segment spans residues 260–267 (SAYGSNLR). A helical transmembrane segment spans residues 268–288 (AAMAITNTNLAGAVAGLVWVI). Residues 289–300 (YDYIFRTRKWST) are Cytoplasmic-facing. Residues 301 to 321 (IGFCSGVVAGLVAATPCAGFV) traverse the membrane as a helical segment. Residue Ser322 is a topological domain, extracellular. The chain crosses the membrane as a helical span at residues 323–343 (PHASLAIGAITGLCCNWAIKL). Over 344-354 (KSHMRIDDAMD) the chain is Cytoplasmic. Residues 355–375 (IFAIHGVAGFVGTFLNGLFAV) traverse the membrane as a helical segment. At 376–406 (DYIAAMDGIYVGENKIRGGWFDHHWRQLGLQ) the chain is on the extracellular side. The helical transmembrane segment at 407 to 427 (MAYICAVGAYDFVVTFIILFI) threads the bilayer. The Cytoplasmic portion of the chain corresponds to 428 to 512 (TDKIPYLQLR…TNPLELGLTI (85 aa)).

The protein belongs to the ammonia transporter channel (TC 1.A.11.2) family.

The protein resides in the membrane. Its function is as follows. Transporter for ammonium to use as a nitrogen source. This is Ammonium transporter 2 (amt2) from Schizosaccharomyces pombe (strain 972 / ATCC 24843) (Fission yeast).